We begin with the raw amino-acid sequence, 109 residues long: Phycoerythrin alpha-2 subunit (109 aa).

Positions 52, 53, 63, 64, 67, 72, 74, 75, and 84 each coordinate (2R,3E)-phycoerythrobilin.

This sequence belongs to the phycoerythrin family. As to quaternary structure, heterotetramer of 2 different alpha chains and 2 identical beta chains which form 2 alpha-beta heterodimers within the heterotetramer. The two alpha-beta heterodimers are rotated to an open configuration in contrast to the closed configuration found in other cryptophyte species due to the insertion of a single amino acid, Asp-65, in a conserved region of the alpha chain. In the open form, the central chromophores are not in physical contact but are separated by a water-filled channel. Contains three phycoerythrobilin chromophores with binding mediated by both the alpha and beta subunits.

It is found in the plastid. The protein localises to the chloroplast thylakoid membrane. In terms of biological role, light-harvesting photosynthetic tetrapyrrole chromophore-protein from the phycobiliprotein complex. The polypeptide is Phycoerythrin alpha-2 subunit (Hemiselmis andersenii (Cryptophyte alga)).